The following is a 1191-amino-acid chain: Laminin subunit gamma-2 (1191 aa).

Positions 1-21 are cleaved as a signal peptide; that stretch reads MPALWLSCCLGVALLLPAAQA. Cystine bridges form between C28-C37, C30-C53, C56-C65, C68-C81, C84-C96, C86-C102, C104-C113, C116-C128, C139-C150, C141-C155, C157-C166, and C169-C184. Laminin EGF-like domains follow at residues 28-83, 84-130, and 139-186; these read CDCN…RCLP, CNCH…GCTR, and CDCD…GCTQ. In terms of domain architecture, Laminin EGF-like 4; first part spans 187–196; it reads CFCYGHSASC. One can recognise a Laminin IV type A domain in the interval 213 to 381; it reads QDVDGWKAVQ…SGAPAPWVER (169 aa). N-linked (GlcNAc...) asparagine glycans are attached at residues N342 and N362. Positions 382–415 constitute a Laminin EGF-like 4; second part domain; it reads CVCPAGYKGQFCQECASGYKRDSARLGPFGACVP. Laminin EGF-like domains are found at residues 416–461, 462–516, and 517–572; these read CNCQ…SCKP, CPCH…PCQR, and CQCN…KCRA. Intrachain disulfides connect C462-C470, C464-C481, C484-C493, C496-C514, C517-C531, C519-C538, C541-C550, C553-C570, C573-C585, C575-C591, and C593-C602. N-linked (GlcNAc...) asparagine glycosylation occurs at N526. The Laminin EGF-like 8; truncated domain maps to 573–602; it reads CNCSPMGSEPGECRGDGSCVCKPGFGGLNC. Positions 586 to 588 match the Cell attachment site motif; it reads RGD. Positions 603–1191 are domain II and I; sequence DHAALTSCPA…CYNTQALEQQ (589 aa). 2 coiled-coil regions span residues 612 to 710 and 759 to 786; these read ACYN…IRAL and LAQE…ETED. Residue S805 is glycosylated (O-linked (Xyl...) (chondroitin sulfate) serine). N-linked (GlcNAc...) asparagine glycosylation occurs at N941. Positions 946–996 form a coiled coil; that stretch reads EVENILKNLREFDLQVEDRKAEAEEAMKRLSSISQKVADASDKTQQAETAL. N1032 carries an N-linked (GlcNAc...) asparagine glycan. A coiled-coil region spans residues 1139-1178; it reads LMSDLEERVRRQRNHLHLLETSIDGILADVKNLENIRDNL.

In terms of assembly, laminin is a complex glycoprotein, consisting of three different polypeptide chains (alpha, beta, gamma), which are bound to each other by disulfide bonds into a cross-shaped molecule comprising one long and three short arms with globules at each end. Gamma-2 is a subunit of laminin-5 (laminin-332 or epiligrin/kalinin/nicein). Binds to fibulin-1, fibulin-1c, fibulin-2 and nidogen. Post-translationally, O-glycosylated; contains chondroitin sulfate (CS). As to expression, epithelial cells of many tissues, particularly high levels in tongue, hair follicles and kidney. Basement membranes of the collecting tubules of kidney and pancreas.

The protein localises to the secreted. Its subcellular location is the extracellular space. It is found in the extracellular matrix. The protein resides in the basement membrane. In terms of biological role, binding to cells via a high affinity receptor, laminin is thought to mediate the attachment, migration and organization of cells into tissues during embryonic development by interacting with other extracellular matrix components. In Mus musculus (Mouse), this protein is Laminin subunit gamma-2 (Lamc2).